A 229-amino-acid chain; its full sequence is Large ribosomal subunit protein uL1 (229 aa).

It belongs to the universal ribosomal protein uL1 family. In terms of assembly, part of the 50S ribosomal subunit.

In terms of biological role, binds directly to 23S rRNA. The L1 stalk is quite mobile in the ribosome, and is involved in E site tRNA release. Functionally, protein L1 is also a translational repressor protein, it controls the translation of the L11 operon by binding to its mRNA. This chain is Large ribosomal subunit protein uL1, found in Streptococcus suis (strain 98HAH33).